A 328-amino-acid polypeptide reads, in one-letter code: Tetraacyldisaccharide 4'-kinase (328 aa).

55–62 (TAGGNGKT) is a binding site for ATP.

Belongs to the LpxK family.

It catalyses the reaction a lipid A disaccharide + ATP = a lipid IVA + ADP + H(+). It participates in glycolipid biosynthesis; lipid IV(A) biosynthesis; lipid IV(A) from (3R)-3-hydroxytetradecanoyl-[acyl-carrier-protein] and UDP-N-acetyl-alpha-D-glucosamine: step 6/6. Its function is as follows. Transfers the gamma-phosphate of ATP to the 4'-position of a tetraacyldisaccharide 1-phosphate intermediate (termed DS-1-P) to form tetraacyldisaccharide 1,4'-bis-phosphate (lipid IVA). This Shigella boydii serotype 18 (strain CDC 3083-94 / BS512) protein is Tetraacyldisaccharide 4'-kinase.